The following is a 221-amino-acid chain: MNNLRQEFIKFSVETGVLRFGEFVTKAGRTSPYFFNAGLFNQGRTLAMLAEFYAQTLIDSGIEFDMLFGPAYKGITLASATAVALANKGRDVSFAFNRKEAKDHGEGGTMVGAKLQGRVVIIDDVISAGTSVRESVDMIRAAGATPCAVMIALDRMERSGADGALSAHSAVQEVSNTYGMPVVSIGNLSDLFEYLSNAGADSEQAKYKEAVAAYRQRYGVA.

Position 26 (Lys-26) interacts with 5-phospho-alpha-D-ribose 1-diphosphate. 34-35 is an orotate binding site; the sequence is FF. 5-phospho-alpha-D-ribose 1-diphosphate contacts are provided by residues 72 to 73, Arg-98, Lys-99, Lys-102, His-104, and 123 to 131; these read YK and DDVISAGTS. Orotate contacts are provided by Ser-127 and Arg-155.

Belongs to the purine/pyrimidine phosphoribosyltransferase family. PyrE subfamily. As to quaternary structure, homodimer. Mg(2+) is required as a cofactor.

The enzyme catalyses orotidine 5'-phosphate + diphosphate = orotate + 5-phospho-alpha-D-ribose 1-diphosphate. The protein operates within pyrimidine metabolism; UMP biosynthesis via de novo pathway; UMP from orotate: step 1/2. In terms of biological role, catalyzes the transfer of a ribosyl phosphate group from 5-phosphoribose 1-diphosphate to orotate, leading to the formation of orotidine monophosphate (OMP). This Janthinobacterium sp. (strain Marseille) (Minibacterium massiliensis) protein is Orotate phosphoribosyltransferase.